The sequence spans 300 residues: Sporulation protein SPS18 (300 aa).

One can recognise an Arf-GAP domain in the interval glutamate 11 to isoleucine 130. The C4-type zinc finger occupies cysteine 28–cysteine 51.

In Saccharomyces cerevisiae (strain ATCC 204508 / S288c) (Baker's yeast), this protein is Sporulation protein SPS18 (SPS18).